Here is a 104-residue protein sequence, read N- to C-terminus: UPF0473 protein LJ_0477 (104 aa).

It belongs to the UPF0473 family.

This is UPF0473 protein LJ_0477 from Lactobacillus johnsonii (strain CNCM I-12250 / La1 / NCC 533).